A 615-amino-acid chain; its full sequence is Sodium-dependent neutral amino acid transporter B(0)AT3 (615 aa).

Topologically, residues 1–26 are cytoplasmic; it reads MAQASGMDPLVDIEDERPKWDNKLQY. A helical transmembrane segment spans residues 27–47; it reads LLSCIGFAVGLGNIWRFPYLC. Over 48 to 52 the chain is Extracellular; sequence HTHGG. The chain crosses the membrane as a helical span at residues 53 to 73; sequence GAFLIPYFIALVFEGIPLFYI. Topologically, residues 74-105 are cytoplasmic; it reads ELAIGQRLRRGSIGVWKTISPYLGGVGLGCFS. A helical transmembrane segment spans residues 106-126; it reads VSFLVSLYYNTILLWVLWFFL. The Extracellular portion of the chain corresponds to 127–177; that stretch reads NSFQHPLPWSTCPLDLNRTGFVQECQSSGTVSYFWYRQTLNITSDISNTGT. N-linked (GlcNAc...) asparagine glycans are attached at residues N143 and N167. A helical membrane pass occupies residues 178 to 198; sequence IQWKLFLCLVACWTTVYLCVI. Residues 199 to 206 are Cytoplasmic-facing; sequence RGIESTGK. Residues 207-227 form a helical membrane-spanning segment; sequence VIYFTALFPYLVLTIFLIRGL. The Extracellular segment spans residues 228–255; it reads TLPGATEGLTYLFTPNMKILQNSRVWLD. The helical transmembrane segment at 256 to 276 threads the bilayer; that stretch reads AATQIFFSLSLAFGGHIAFAS. The Cytoplasmic segment spans residues 277-290; sequence YNQPRNNCEKDAVT. A helical transmembrane segment spans residues 291–311; it reads IALVNSMTSLYASITIFSIMG. Topologically, residues 312–397 are extracellular; it reads FKASNDYGRC…FTEAVLHMPG (86 aa). N-linked (GlcNAc...) asparagine glycosylation occurs at N353. A helical transmembrane segment spans residues 398-418; sequence ASVWSVLFFGMLFTLGLSSMF. Residues 419 to 442 are Cytoplasmic-facing; sequence GNMEGVITPLFDMGILPKGVPKET. A helical transmembrane segment spans residues 443 to 463; sequence MTGVVCFICFLSAICFTLQSG. Topologically, residues 464–472 are extracellular; it reads SYWLEIFDS. The helical transmembrane segment at 473–493 threads the bilayer; sequence FAASLNLIIFAFMEVVGVIHV. At 494-520 the chain is on the cytoplasmic side; the sequence is YGIKRFCDDIEWMTGRRPSLYWQVTWR. The chain crosses the membrane as a helical span at residues 521–541; sequence VVSPMLLFGIFLSYIVLLAQS. Topologically, residues 542-571 are extracellular; the sequence is SPSYKAWNPQYEHFPSREEKLYPGWVQVTC. The chain crosses the membrane as a helical span at residues 572-592; the sequence is VLLSFLPSLWVPGIALAQLLF. At 593 to 615 the chain is on the cytoplasmic side; the sequence is QYRQRWKNTHLESALKPQESRGC.

This sequence belongs to the sodium:neurotransmitter symporter (SNF) (TC 2.A.22) family. SLC6A18 subfamily. As to quaternary structure, interacts with CLTRN; this interaction regulates the trafficking of SLC6A18 to the cell membrane and its activity. As to expression, kidney-specific expression.

It is found in the apical cell membrane. The protein resides in the cell membrane. The enzyme catalyses L-alanine(out) + chloride(out) + 2 Na(+)(out) = L-alanine(in) + chloride(in) + 2 Na(+)(in). It carries out the reaction glycine(out) + chloride(out) + 2 Na(+)(out) = glycine(in) + chloride(in) + 2 Na(+)(in). It catalyses the reaction L-methionine(out) + chloride(out) + 2 Na(+)(out) = L-methionine(in) + chloride(in) + 2 Na(+)(in). The catalysed reaction is L-valine(out) + chloride(out) + 2 Na(+)(out) = L-valine(in) + chloride(in) + 2 Na(+)(in). The enzyme catalyses L-isoleucine(out) + chloride(out) + 2 Na(+)(out) = L-isoleucine(in) + chloride(in) + 2 Na(+)(in). It carries out the reaction L-serine(out) + chloride(out) + 2 Na(+)(out) = L-serine(in) + chloride(in) + 2 Na(+)(in). It catalyses the reaction L-leucine(out) + chloride(out) + 2 Na(+)(out) = L-leucine(in) + chloride(in) + 2 Na(+)(in). Its function is as follows. Symporter that transports one amino acid molecule together with two sodium and one chloride ions in kidneys and plays a role in the neutral amino acids reabsorption. Preferentially transports neutral amino acids such as L-glycine and L-alanine but also other neutral amino acids. Required CLTRN for cell surface expression and for its amino acid transporter activity. The transport mechanism is pH-independent. In Rattus norvegicus (Rat), this protein is Sodium-dependent neutral amino acid transporter B(0)AT3.